Here is a 278-residue protein sequence, read N- to C-terminus: Neuronal membrane glycoprotein M6-a (278 aa).

M1 carries the N-acetylmethionine modification. Topologically, residues 1-22 are cytoplasmic; sequence MEENMEEGQTQKGCFECCIKCL. The chain crosses the membrane as a helical span at residues 23–43; that stretch reads GGIPYASLIATILLYAGVALF. Residues 44-84 are Extracellular-facing; that stretch reads CGCGHEALSGTVNILQTYFELARTAGDTLDVFTMIDIFKYV. A helical transmembrane segment spans residues 85-105; it reads IYGIAAAFFVYGILLMVEGFF. Topologically, residues 106 to 127 are cytoplasmic; the sequence is TTGAIKDLYGDFKITTCGRCVS. A helical transmembrane segment spans residues 128-148; it reads AWFIMLTYLFMLAWLGVTAFT. Over 149–213 the chain is Extracellular; it reads SLPVYMYFNV…STELNMTFHL (65 aa). A glycan (N-linked (GlcNAc...) asparagine) is linked at N164. Cysteines 174 and 192 form a disulfide. N-linked (GlcNAc...) asparagine glycosylation occurs at N208. The chain crosses the membrane as a helical span at residues 214 to 234; sequence FIVALAGAGAAVIAMVHYLMV. At 235 to 278 the chain is on the cytoplasmic side; it reads LSANWAYVKDACRMQKYEDIKSKEEQELHDIHSTRSKERLNAYT. At S256 the chain carries Phosphoserine. T278 carries the post-translational modification Phosphothreonine.

Belongs to the myelin proteolipid protein family. As to quaternary structure, interacts with OPRM1. Interacts with palmitoyltransferase ZDHHC17/HIP14; the interaction leads to palmitoylation of GPM6A. In terms of processing, N-glycosylated. Post-translationally, palmitoylated by ZDHHC17/HIP14. As to expression, widely expressed in the CNS. Found especially in the granule cell layer of the cerebellum but not in the molecular layer or white matter. Expressed in the immature embryonic retina including the nerve fiber layer (NFL), inner plexiform layer (IPL), and outer plexiform layer (OPL). Weakly expressed in processes of Mueller glia cells.

The protein resides in the cell membrane. It is found in the cell projection. It localises to the axon. Its subcellular location is the growth cone. The protein localises to the dendritic spine. The protein resides in the filopodium. It is found in the neuron projection. Involved in neuronal differentiation, including differentiation and migration of neuronal stem cells. Plays a role in neuronal plasticity and is involved in neurite and filopodia outgrowth, filopodia motility and probably synapse formation. Gpm6a-induced filopodia formation involves mitogen-activated protein kinase (MAPK) and Src signaling pathways. Conflictingly, PubMed:22162747 reports that induced cellular protrusions are simple membrane-wrapped tubules without actin or tubulin-based cytoskeletons and with Gpm6a gliding along membrane edges indicative for a function in actin-independent membrane deformation. May be involved in neuronal NGF-dependent Ca(2+) influx. May be involved in regulation of endocytosis and intracellular trafficking of G-protein-coupled receptors (GPCRs); enhances internalization and recycling of mu-type opioid receptor. In Mus musculus (Mouse), this protein is Neuronal membrane glycoprotein M6-a (Gpm6a).